The chain runs to 438 residues: Zinc finger protein 641 (438 aa).

Positions 1–53 (MQAEDRSQFGSAAEMLSEQTAALGTGWESMNVQLDGAEPQVERGSQEERPWRT) are disordered. The span at 17 to 32 (SEQTAALGTGWESMNV) shows a compositional bias: polar residues. Residues 40–51 (QVERGSQEERPW) are compositionally biased toward basic and acidic residues. The region spanning 109-181 (VTIKDVSLCF…DPQDLEERDI (73 aa)) is the KRAB domain. The segment at 171–265 (PDPQDLEERD…EMDSLLRPHT (95 aa)) is transactivation. Ser191 carries the phosphoserine modification. 3 C2H2-type zinc fingers span residues 264–286 (HTCPQCGKQFVWGSHLARHQQTH), 292–314 (YSCLKCEKTFGRRHHLIRHQKTH), and 320–342 (SRCSECGKNFRCNSHLASHQRVH). The interval 345 to 367 (GKSCKGQEVGESPGTRKRQRAPP) is disordered. 2 consecutive C2H2-type zinc fingers follow at residues 372 to 394 (HVCTECGKSFGRRHHLVRHWLTH) and 400 to 422 (FQCPRCEKSFGRKHHLDRHLLTH). Residues 418 to 438 (HLLTHQGQSPRNSWDRGTSVF) form a disordered region. A compositionally biased stretch (polar residues) spans 422-438 (HQGQSPRNSWDRGTSVF). Ser426 is modified (phosphoserine).

This sequence belongs to the krueppel C2H2-type zinc-finger protein family. As to expression, highly expressed in skeletal muscle, moderate expression in heart, liver, and pancreas, lower expression in placenta, no expression seen in brain, lung, and kidney.

The protein resides in the nucleus. Its function is as follows. Transcriptional activator. Activates transcriptional activities of SRE and AP-1. The polypeptide is Zinc finger protein 641 (ZNF641) (Homo sapiens (Human)).